The chain runs to 121 residues: Large ribosomal subunit protein uL18 (121 aa).

The protein belongs to the universal ribosomal protein uL18 family. Part of the 50S ribosomal subunit; part of the 5S rRNA/L5/L18/L25 subcomplex. Contacts the 5S and 23S rRNAs.

This is one of the proteins that bind and probably mediate the attachment of the 5S RNA into the large ribosomal subunit, where it forms part of the central protuberance. The polypeptide is Large ribosomal subunit protein uL18 (Paraburkholderia xenovorans (strain LB400)).